The sequence spans 629 residues: tRNA uridine 5-carboxymethylaminomethyl modification enzyme MnmG (629 aa).

FAD-binding positions include 13-18 (GGGHAG), Val125, and Ser180. Position 273-287 (273-287 (GPRYCPSIEDKVMRF)) interacts with NAD(+). Gln370 is an FAD binding site.

It belongs to the MnmG family. In terms of assembly, homodimer. Heterotetramer of two MnmE and two MnmG subunits. FAD is required as a cofactor.

It localises to the cytoplasm. In terms of biological role, NAD-binding protein involved in the addition of a carboxymethylaminomethyl (cmnm) group at the wobble position (U34) of certain tRNAs, forming tRNA-cmnm(5)s(2)U34. The protein is tRNA uridine 5-carboxymethylaminomethyl modification enzyme MnmG of Cronobacter sakazakii (strain ATCC BAA-894) (Enterobacter sakazakii).